Consider the following 237-residue polypeptide: Concanavalin-A (237 aa).

Mn(2+) contacts are provided by Glu8 and Asp10. Asp10, Tyr12, Asn14, and Asp19 together coordinate Ca(2+). Asn14 contributes to the a carbohydrate binding site. The Mn(2+) site is built by Asp19 and His24. Residues 98–100 (GLY), Asp208, and Arg228 each bind a carbohydrate.

Belongs to the leguminous lectin family. In terms of assembly, homotetramer. In terms of processing, concanavalin A-like lectins of the Diocleinae subtribe undergo proteolytic processing referred to as circular permutation. The propeptide is split into an N-terminal and a C-terminal part, the gamma and beta chain, respectively. These are then religated in beta-gamma order to form the mature alpha chain. The beta and gamma chains can often be detected in cell extracts. Residues 1-118 of the mature chain, as displayed here, probably constitute the beta chain in the propeptide, residues 119-237 the gamma chain.

Glucose/D-mannose specific lectin. The protein is Concanavalin-A of Canavalia cathartica (Jackbean).